A 101-amino-acid polypeptide reads, in one-letter code: Feather keratin Cos2-3 (101 aa).

S2 is modified (N-acetylserine).

Belongs to the avian keratin family. The avian keratins (F-ker, S-ker, C-ker and B-ker) are a complex mixture of very similar polypeptides.

This is Feather keratin Cos2-3 from Columba livia (Rock dove).